The chain runs to 367 residues: RYamide receptor (367 aa).

At 1–35 (MDANTTRNESFSLDCELVNPNSTLANVYFLSAVYS) the chain is on the extracellular side. N4, N8, and N21 each carry an N-linked (GlcNAc...) asparagine glycan. A helical transmembrane segment spans residues 36-56 (MYAIIFVVALIGNSFVCYIVL). Residues 57–66 (SSPPMRTVTN) are Cytoplasmic-facing. Residues 67-87 (FFILNLAIGDVLITLLCVPFT) form a helical membrane-spanning segment. Residues 88 to 113 (SVSLLMQYWPFGGILCPVVNYSQALS) are Extracellular-facing. N107 carries an N-linked (GlcNAc...) asparagine glycan. The helical transmembrane segment at 114–134 (VFVSAYTLVAISIDKYMIIMW) threads the bilayer. Topologically, residues 135-143 (PLKPRISKR) are cytoplasmic. A helical membrane pass occupies residues 144–164 (FATYIIALVWLIAGITVLPSA). Residues 165-212 (TFTTLINDENILGTSAYEQCDKYICAEEYSKVGQEYGDLYTKVLMFLQ) lie on the Extracellular side of the membrane. A helical transmembrane segment spans residues 213-233 (YVIPSLVLLFTYTSIGVVIWC). Topologically, residues 234 to 258 (HRIPGEAENSRDQRIAKNKTKMIKM) are cytoplasmic. Residues 259-279 (MVTVVCVYTICWLPYNVLMIF) form a helical membrane-spanning segment. Topologically, residues 280-282 (KEH) are extracellular. Residues 283–303 (ISGSVMVYLYFPLHGLAMSHA) form a helical membrane-spanning segment. The Cytoplasmic portion of the chain corresponds to 304–367 (CYNPIIYCYM…EITRAQPTSA (64 aa)).

The protein belongs to the G-protein coupled receptor 1 family.

The protein localises to the cell membrane. Functionally, receptor for the neuropeptides RYamide-1 and RYamide-2. The activity of this receptor is mediated by G proteins which activate a phosphatidyl-inositol-calcium second messenger system. RYamide-2 is the most potent activator. The protein is RYamide receptor of Tribolium castaneum (Red flour beetle).